Consider the following 125-residue polypeptide: U-scoloptoxin(05)-Er1a (125 aa).

The N-terminal stretch at 1–20 (MLSLGVSIFLLVFLIPENSG) is a signal peptide.

The protein belongs to the scoloptoxin-05 family. Contains 4 disulfide bonds. As to expression, expressed by the venom gland.

The protein localises to the secreted. In Ethmostigmus rubripes (Giant centipede), this protein is U-scoloptoxin(05)-Er1a.